The primary structure comprises 875 residues: MSKSTAEIRQAFLDFFHSKGHQVVASSSLVPHNDPTLLFTNAGMNQFKDVFLGLDKRNYSRATTAQRCVRAGGKHNDLENVGYTARHHTFFEMLGNFSFGDYFKQDAIKYAWELLTGENWFALPKEKLWVTVYETDDEAFDIWANEVGVPRERIIRIGDNKGAPFASDNFWQMGDTGPCGPCTEIFFDHGDHIWGGPPGSPEEDGDRYIEIWNIVFMQFNRQADGTMEPLPKPSVDTGMGLERIAAVLQHVNSNYDIDLFRDLIASVAKVTGATDLTNKSLRVIADHIRSCAFLVADGVIPSNENRGYVLRRIIRRAIRHGNMLGAKDTFFWKLVAPLIDVMGSAGDELKQQQAQVEQVLKTEEEQFARTLERGLALLDEELSKLKGDTLDGETAFRLYDTYGFPVDLTADVCRERNIKVDEAGFEAAMEEQRRRARESSGFGADYNAMIRVDGASEFKGYDHLELNGKVTALFIDGKAVDSVSAGQEAVVILDQTPFYAESGGQVGDKGELKGAGFSFAVSDTQKYGQAIGHIGKVASGSLKVGDAVQADVDEARRHRIRLNHSATHLMHAALRQVLGTHVAQKGSLVNDKALRFDFSHFEAMKPEEIRAVEDLVNAQIRRNLAIETNIMDIDAARASGAMALFGEKYDDRVRVLRMGDFSTELCGGTHAARTGDIGLFRITSESGTAAGVRRIEAVTGEGAMAILHAQSDQLNDIAQLLKGDSHNLGEKVRAALERTRQLEKELQQLKEQAAAQESANLSSKAEEINGVKLLVSELTGVEPKMLRTMVDDLKNQLGSTIVVLATVADGKVSLIAGVSKDVTDRVKAGELVGMVAQQVGGKGGGRPDMAQAGGTDASALPAALASVKGWVSAKL.

Positions 564, 568, 666, and 670 each coordinate Zn(2+).

This sequence belongs to the class-II aminoacyl-tRNA synthetase family. As to quaternary structure, homotetramer. Zn(2+) is required as a cofactor.

It localises to the cytoplasm. It carries out the reaction tRNA(Ala) + L-alanine + ATP = L-alanyl-tRNA(Ala) + AMP + diphosphate. Functionally, catalyzes the attachment of alanine to tRNA(Ala) in a two-step reaction: alanine is first activated by ATP to form Ala-AMP and then transferred to the acceptor end of tRNA(Ala). Also edits incorrectly charged Ser-tRNA(Ala) and Gly-tRNA(Ala) via its editing domain. This is Alanine--tRNA ligase from Klebsiella pneumoniae subsp. pneumoniae (strain ATCC 700721 / MGH 78578).